A 142-amino-acid chain; its full sequence is Large-conductance mechanosensitive channel (142 aa).

3 helical membrane passes run 10–30 (FAVKGNVVDLAVGVIIGGAFG), 40–60 (LIMPVVGLVFGKLDFSNLFVV), and 86–106 (GNFITVAVNFIILAFIIFMMV).

It belongs to the MscL family. As to quaternary structure, homopentamer.

It localises to the cell inner membrane. Functionally, channel that opens in response to stretch forces in the membrane lipid bilayer. May participate in the regulation of osmotic pressure changes within the cell. In Delftia acidovorans (strain DSM 14801 / SPH-1), this protein is Large-conductance mechanosensitive channel.